A 454-amino-acid chain; its full sequence is Mitochondrial distribution and morphology protein 10 (454 aa).

It belongs to the MDM10 family. In terms of assembly, component of the ER-mitochondria encounter structure (ERMES) or MDM complex, composed of MMM1, MDM10, MDM12 and MDM34. Associates with the mitochondrial outer membrane sorting assembly machinery SAM(core) complex.

The protein resides in the mitochondrion outer membrane. Component of the ERMES/MDM complex, which serves as a molecular tether to connect the endoplasmic reticulum and mitochondria. Components of this complex are involved in the control of mitochondrial shape and protein biogenesis and may function in phospholipid exchange. MDM10 is involved in the late assembly steps of the general translocase of the mitochondrial outer membrane (TOM complex). Functions in the TOM40-specific route of the assembly of outer membrane beta-barrel proteins, including the association of TOM40 with the receptor TOM22 and small TOM proteins. Can associate with the SAM(core) complex as well as the MDM12-MMM1 complex, both involved in late steps of the major beta-barrel assembly pathway, that is responsible for biogenesis of all outer membrane beta-barrel proteins. May act as a switch that shuttles between both complexes and channels precursor proteins into the TOM40-specific pathway. Plays a role in mitochondrial morphology and in the inheritance of mitochondria. In Candida tropicalis (strain ATCC MYA-3404 / T1) (Yeast), this protein is Mitochondrial distribution and morphology protein 10.